Reading from the N-terminus, the 676-residue chain is Serine/threonine-protein kinase Haspin homolog ALK2 (676 aa).

The tract at residues H53–S93 is disordered. Residues Q62–T75 are compositionally biased toward polar residues. The short motif at K116–N118 is the KEN box element. The D box signature appears at R150–N158. The disordered stretch occupies residues S228–K312. The segment covering V232–N259 has biased composition (polar residues). Residues L383–G672 form the Protein kinase domain. ATP contacts are provided by residues I389 to Q397 and K430.

This sequence belongs to the protein kinase superfamily. Ser/Thr protein kinase family. Haspin subfamily. Post-translationally, periodically phosphorylated during the cell cycle with a phosphorylation peak during mitosis and hyperphosphorylated after DNA damage.

The enzyme catalyses L-seryl-[protein] + ATP = O-phospho-L-seryl-[protein] + ADP + H(+). It catalyses the reaction L-threonyl-[protein] + ATP = O-phospho-L-threonyl-[protein] + ADP + H(+). Its function is as follows. Serine/threonine haspin-like protein kinase involved in cell cycle regulation. This chain is Serine/threonine-protein kinase Haspin homolog ALK2 (ALK2), found in Saccharomyces cerevisiae (strain ATCC 204508 / S288c) (Baker's yeast).